An 805-amino-acid chain; its full sequence is Mitochondrial intermediate peptidase (805 aa).

The transit peptide at 1 to 25 (MIQPLVKASRPRLWVCSDCLLRRTL) directs the protein to the mitochondrion. H578 serves as a coordination point for Zn(2+). E579 is an active-site residue. 2 residues coordinate Zn(2+): H582 and H585.

The protein belongs to the peptidase M3 family. The cofactor is Zn(2+).

The protein resides in the mitochondrion matrix. It carries out the reaction Release of an N-terminal octapeptide as second stage of processing of some proteins imported into the mitochondrion.. Functionally, cleaves proteins, imported into the mitochondrion, to their mature size. While most mitochondrial precursor proteins are processed to the mature form in one step by mitochondrial processing peptidase (MPP), the sequential cleavage by MIP of an octapeptide after initial processing by MPP is a required step for a subgroup of nuclear-encoded precursor proteins destined for the matrix or the inner membrane. The sequence is that of Mitochondrial intermediate peptidase (oct-1) from Neurospora crassa (strain ATCC 24698 / 74-OR23-1A / CBS 708.71 / DSM 1257 / FGSC 987).